Consider the following 24-residue polypeptide: Humanin-like 11 (24 aa).

It belongs to the humanin family.

The protein resides in the secreted. Its subcellular location is the cytoplasm. Its function is as follows. Plays a role as a neuroprotective and antiapoptotic factor. In Homo sapiens (Human), this protein is Humanin-like 11.